The primary structure comprises 191 residues: Holliday junction branch migration complex subunit RuvA (191 aa).

The interval 1–63 (MIRYLRGLVL…EEGLSLYGFP (63 aa)) is domain I. The interval 64–136 (DEENLALFEL…LKGKVPPHLL (73 aa)) is domain II. A flexible linker region spans residues 136–140 (LAGEK). The domain III stretch occupies residues 141–191 (VESEAAEEAVMALAALGFKEAQARAVVLDLLAQNPKARAQDLIKEALKRLR).

It belongs to the RuvA family. Homotetramer. Forms an RuvA(8)-RuvB(12)-Holliday junction (HJ) complex. HJ DNA is sandwiched between 2 RuvA tetramers; dsDNA enters through RuvA and exits via RuvB. An RuvB hexamer assembles on each DNA strand where it exits the tetramer. Each RuvB hexamer is contacted by two RuvA subunits (via domain III) on 2 adjacent RuvB subunits; this complex drives branch migration. In the full resolvosome a probable DNA-RuvA(4)-RuvB(12)-RuvC(2) complex forms which resolves the HJ.

Its subcellular location is the cytoplasm. In terms of biological role, the RuvA-RuvB-RuvC complex processes Holliday junction (HJ) DNA during genetic recombination and DNA repair, while the RuvA-RuvB complex plays an important role in the rescue of blocked DNA replication forks via replication fork reversal (RFR). RuvA specifically binds to HJ cruciform DNA, conferring on it an open structure. The RuvB hexamer acts as an ATP-dependent pump, pulling dsDNA into and through the RuvAB complex. HJ branch migration allows RuvC to scan DNA until it finds its consensus sequence, where it cleaves and resolves the cruciform DNA. The protein is Holliday junction branch migration complex subunit RuvA of Thermus thermophilus (strain ATCC BAA-163 / DSM 7039 / HB27).